We begin with the raw amino-acid sequence, 491 residues long: Protein nucleotidyltransferase YdiU (491 aa).

8 residues coordinate ATP: Gly-94, Gly-96, Arg-97, Lys-117, Asp-129, Gly-130, Arg-180, and Arg-187. Asp-256 (proton acceptor) is an active-site residue. Asn-257 and Asp-266 together coordinate Mg(2+). Residue Asp-266 coordinates ATP.

This sequence belongs to the SELO family. It depends on Mg(2+) as a cofactor. Requires Mn(2+) as cofactor.

The enzyme catalyses L-seryl-[protein] + ATP = 3-O-(5'-adenylyl)-L-seryl-[protein] + diphosphate. The catalysed reaction is L-threonyl-[protein] + ATP = 3-O-(5'-adenylyl)-L-threonyl-[protein] + diphosphate. It catalyses the reaction L-tyrosyl-[protein] + ATP = O-(5'-adenylyl)-L-tyrosyl-[protein] + diphosphate. It carries out the reaction L-histidyl-[protein] + UTP = N(tele)-(5'-uridylyl)-L-histidyl-[protein] + diphosphate. The enzyme catalyses L-seryl-[protein] + UTP = O-(5'-uridylyl)-L-seryl-[protein] + diphosphate. The catalysed reaction is L-tyrosyl-[protein] + UTP = O-(5'-uridylyl)-L-tyrosyl-[protein] + diphosphate. Functionally, nucleotidyltransferase involved in the post-translational modification of proteins. It can catalyze the addition of adenosine monophosphate (AMP) or uridine monophosphate (UMP) to a protein, resulting in modifications known as AMPylation and UMPylation. This chain is Protein nucleotidyltransferase YdiU, found in Clostridium botulinum (strain Okra / Type B1).